Here is a 317-residue protein sequence, read N- to C-terminus: L-lactate dehydrogenase (317 aa).

Residues V16, D37, K42, Y68, and 82–83 contribute to the NAD(+) site; that span reads GA. Residues Q85 and R91 each coordinate substrate. NAD(+) contacts are provided by residues T104, 121-123, and S146; that span reads ATN. 123-126 provides a ligand contact to substrate; the sequence is NPVD. 151-154 contacts substrate; the sequence is DTAR. Residues R156 and H171 each coordinate beta-D-fructose 1,6-bisphosphate. The active-site Proton acceptor is H178. A Phosphotyrosine modification is found at Y222. T231 serves as a coordination point for substrate.

This sequence belongs to the LDH/MDH superfamily. LDH family. In terms of assembly, homotetramer.

The protein localises to the cytoplasm. It catalyses the reaction (S)-lactate + NAD(+) = pyruvate + NADH + H(+). It participates in fermentation; pyruvate fermentation to lactate; (S)-lactate from pyruvate: step 1/1. Its activity is regulated as follows. Allosterically activated by fructose 1,6-bisphosphate (FBP). In terms of biological role, catalyzes the conversion of lactate to pyruvate. This is L-lactate dehydrogenase from Corynebacterium efficiens (strain DSM 44549 / YS-314 / AJ 12310 / JCM 11189 / NBRC 100395).